We begin with the raw amino-acid sequence, 50 residues long: ISSQHLCGSHLVEALNLVCGDRGFFYNPRGIVEQCCHRPCSMFELENYCN.

3 cysteine pairs are disulfide-bonded: Cys7/Cys36, Cys19/Cys49, and Cys35/Cys40.

This sequence belongs to the insulin family. Heterodimer of a B chain and an A chain linked by two disulfide bonds.

It is found in the secreted. In terms of biological role, insulin decreases blood glucose concentration. It increases cell permeability to monosaccharides, amino acids and fatty acids. It accelerates glycolysis, the pentose phosphate cycle, and glycogen synthesis in liver. The sequence is that of Insulin-1 from Thunnus orientalis (North Pacific bluefin tuna).